The following is a 341-amino-acid chain: Protein phosphatase methylesterase 1 (341 aa).

The segment at 1–24 (MAFRKEELSQTLYENESEQSSETK) is disordered. Residues 9–20 (SQTLYENESEQS) show a composition bias toward polar residues. Catalysis depends on residues Ser153, Asp178, and His304.

Belongs to the AB hydrolase superfamily.

The catalysed reaction is [phosphatase 2A protein]-C-terminal L-leucine methyl ester + H2O = [phosphatase 2A protein]-C-terminal L-leucine + methanol + H(+). Functionally, demethylates proteins that have been reversibly carboxymethylated. Demethylates the phosphatase PP2A catalytic subunit. The protein is Protein phosphatase methylesterase 1 (ppe1) of Schizosaccharomyces pombe (strain 972 / ATCC 24843) (Fission yeast).